The chain runs to 614 residues: Leucine-rich repeat and immunoglobulin-like domain-containing nogo receptor-interacting protein 1 (614 aa).

The first 35 residues, 1–35 (MLAGGVRSMPSPLLACWQPILLLVLGSVLSGSATG), serve as a signal peptide directing secretion. 2 cysteine pairs are disulfide-bonded: C36–C42 and C40–C51. Residues 36–65 (CPPRCECSAQDRAVLCHRKRFVAVPEGIPT) form the LRRNT domain. Residues 36 to 555 (CPPRCECSAQ…FDIKTLIIAT (520 aa)) lie on the Extracellular side of the membrane. LRR repeat units lie at residues 66–87 (ETRLLDLGKNRIKTLNQDEFAS), 90–111 (HLEELELNENIVSAVEPGAFNN), 114–135 (NLRTLGLRSNRLKLIPLGVFTG), 138–159 (NLTKLDISENKIVILLDYMFQD), 162–183 (NLKSLEVGDNDLVYISHRAFSG), 186–207 (SLEQLTLEKCNLTSIPTEALSH), 210–231 (GLIVLRLRHLNINAIRDYSFKR), 258–279 (NLTSLSITHCNLTAVPYLAVRH), 282–303 (YLRFLNLSYNPISTIEGSMLHE), 306–327 (RLQEIQLVGGQLAMVEPYAFRG), and 330–351 (YLRVLNVSGNQLTTLEESVFHS). N138 carries N-linked (GlcNAc...) asparagine glycosylation. N-linked (GlcNAc...) asparagine glycosylation is present at N196. N-linked (GlcNAc...) asparagine glycosylation is found at N258, N268, and N287. A glycan (N-linked (GlcNAc...) asparagine) is linked at N335. The 55-residue stretch at 363-417 (NPLACDCRLLWVFRRRWRLNFNRQQPTCATPEFVQGKEFKDFPDVLLPNYFTCRR) folds into the LRRCT domain. 3 cysteine pairs are disulfide-bonded: C367–C390, C369–C415, and C440–C491. An Ig-like C2-type domain is found at 405–507 (PDVLLPNYFT…GNDSMPAHLH (103 aa)). N486 and N536 each carry an N-linked (GlcNAc...) asparagine glycan. The helical transmembrane segment at 556 to 576 (TMGFISFLGVVLFCLVLLFLW) threads the bilayer. The Cytoplasmic portion of the chain corresponds to 577–614 (SRGKGNTKHNIEIEYVPRKSDAGISSADAPRKFNMKMI). Position 596 is a phosphoserine (S596).

As to quaternary structure, homotetramer. Forms a ternary complex with RTN4R/NGFR and RTN4R/TNFRSF19. Interacts with NGRF, RTN4R and MYT1L. In terms of processing, N-glycosylated. Contains predominantly high-mannose glycans.

It is found in the cell membrane. In terms of biological role, functional component of the Nogo receptor signaling complex (RTN4R/NGFR) in RhoA activation responsible for some inhibition of axonal regeneration by myelin-associated factors. Is also an important negative regulator of oligodentrocyte differentiation and axonal myelination. Acts in conjunction with RTN4 and RTN4R in regulating neuronal precursor cell motility during cortical development. This is Leucine-rich repeat and immunoglobulin-like domain-containing nogo receptor-interacting protein 1 (LINGO1) from Macaca fascicularis (Crab-eating macaque).